The sequence spans 184 residues: UPF0301 protein RSKD131_2391 (184 aa).

Belongs to the UPF0301 (AlgH) family.

The polypeptide is UPF0301 protein RSKD131_2391 (Cereibacter sphaeroides (strain KD131 / KCTC 12085) (Rhodobacter sphaeroides)).